The primary structure comprises 171 residues: PBAN-type neuropeptides (171 aa).

A signal peptide spans 1–22; the sequence is MFRLYFFFNVICIFLAIRSAIG. A propeptide spanning residues 23-47 is cleaved from the precursor; that stretch reads GEVPDATEQKINNFLASGKDSEDLS. At Leu-59 the chain carries Leucine amide. A propeptide spanning residues 63–111 is cleaved from the precursor; it reads TIASELHDEMMDEIDDNPLYYSGESPQRVASEIAQGTPYVVLLLTGRVL. The interval 120–151 is disordered; the sequence is HSTTPRLGRRDASSSNENNSRPPFAPRLGRNL. Leucine amide occurs at positions 126, 147, and 157. A propeptide spanning residues 160 to 171 is cleaved from the precursor; it reads SFGAPVVDNFAY.

It belongs to the pyrokinin family.

Its subcellular location is the secreted. Functionally, a hormone that controls sex pheromone production in females and pheromone responsiveness in male. Also mediates visceral muscle contractile activity (myotropic activity). The sequence is that of PBAN-type neuropeptides from Aedes aegypti (Yellowfever mosquito).